Here is a 386-residue protein sequence, read N- to C-terminus: 2-isopropylmalate synthase (386 aa).

The 255-residue stretch at 15–269 (IRIFDTTLRD…ETNVKTWKLY (255 aa)) folds into the Pyruvate carboxyltransferase domain. 4 residues coordinate a divalent metal cation: D24, H207, H209, and N243.

This sequence belongs to the alpha-IPM synthase/homocitrate synthase family. Homodimer. The cofactor is a divalent metal cation.

The catalysed reaction is 3-methyl-2-oxobutanoate + acetyl-CoA + H2O = (2S)-2-isopropylmalate + CoA + H(+). It functions in the pathway amino-acid biosynthesis; L-leucine biosynthesis; L-leucine from 3-methyl-2-oxobutanoate: step 1/4. Its function is as follows. Catalyzes the condensation of the acetyl group of acetyl-CoA with 3-methyl-2-oxobutanoate (2-oxoisovalerate) to form 3-carboxy-3-hydroxy-4-methylpentanoate (2-isopropylmalate). Carries out the first step of the leucine biosynthesis pathway. This Saccharolobus solfataricus (strain ATCC 35092 / DSM 1617 / JCM 11322 / P2) (Sulfolobus solfataricus) protein is 2-isopropylmalate synthase (leuA).